Reading from the N-terminus, the 64-residue chain is Large ribosomal subunit protein bL35 (64 aa).

The protein belongs to the bacterial ribosomal protein bL35 family.

The polypeptide is Large ribosomal subunit protein bL35 (Acidothermus cellulolyticus (strain ATCC 43068 / DSM 8971 / 11B)).